A 314-amino-acid chain; its full sequence is tRNA dimethylallyltransferase (314 aa).

16-23 (GPTGVGKT) lines the ATP pocket. 18–23 (TGVGKT) serves as a coordination point for substrate. Positions 41 to 44 (DSMQ) are interaction with substrate tRNA.

It belongs to the IPP transferase family. As to quaternary structure, monomer. Mg(2+) serves as cofactor.

It carries out the reaction adenosine(37) in tRNA + dimethylallyl diphosphate = N(6)-dimethylallyladenosine(37) in tRNA + diphosphate. In terms of biological role, catalyzes the transfer of a dimethylallyl group onto the adenine at position 37 in tRNAs that read codons beginning with uridine, leading to the formation of N6-(dimethylallyl)adenosine (i(6)A). This is tRNA dimethylallyltransferase from Desulfosudis oleivorans (strain DSM 6200 / JCM 39069 / Hxd3) (Desulfococcus oleovorans).